We begin with the raw amino-acid sequence, 229 residues long: Putative N-acetylmannosamine-6-phosphate 2-epimerase (229 aa).

Belongs to the NanE family.

It carries out the reaction an N-acyl-D-glucosamine 6-phosphate = an N-acyl-D-mannosamine 6-phosphate. Its pathway is amino-sugar metabolism; N-acetylneuraminate degradation; D-fructose 6-phosphate from N-acetylneuraminate: step 3/5. In terms of biological role, converts N-acetylmannosamine-6-phosphate (ManNAc-6-P) to N-acetylglucosamine-6-phosphate (GlcNAc-6-P). This Escherichia coli O127:H6 (strain E2348/69 / EPEC) protein is Putative N-acetylmannosamine-6-phosphate 2-epimerase.